Here is a 144-residue protein sequence, read N- to C-terminus: Large ribosomal subunit protein uL15 (144 aa).

The disordered stretch occupies residues 1-58 (MQLNDLRSAPGARREKLRPGRGIGSGLGKTGGRGHKGQTSRSGGKIAPGFEGGQQPLH). The span at 21–31 (RGIGSGLGKTG) shows a compositional bias: gly residues.

This sequence belongs to the universal ribosomal protein uL15 family. Part of the 50S ribosomal subunit.

Its function is as follows. Binds to the 23S rRNA. This Azotobacter vinelandii (strain DJ / ATCC BAA-1303) protein is Large ribosomal subunit protein uL15.